The primary structure comprises 292 residues: 4-hydroxy-tetrahydrodipicolinate synthase (292 aa).

Threonine 45 contributes to the pyruvate binding site. Tyrosine 133 functions as the Proton donor/acceptor in the catalytic mechanism. Lysine 161 (schiff-base intermediate with substrate) is an active-site residue. Isoleucine 203 contacts pyruvate.

Belongs to the DapA family. As to quaternary structure, homotetramer; dimer of dimers.

The protein localises to the cytoplasm. The enzyme catalyses L-aspartate 4-semialdehyde + pyruvate = (2S,4S)-4-hydroxy-2,3,4,5-tetrahydrodipicolinate + H2O + H(+). Its pathway is amino-acid biosynthesis; L-lysine biosynthesis via DAP pathway; (S)-tetrahydrodipicolinate from L-aspartate: step 3/4. Its function is as follows. Catalyzes the condensation of (S)-aspartate-beta-semialdehyde [(S)-ASA] and pyruvate to 4-hydroxy-tetrahydrodipicolinate (HTPA). In Sodalis glossinidius (strain morsitans), this protein is 4-hydroxy-tetrahydrodipicolinate synthase.